The chain runs to 110 residues: Ribonuclease P protein component 4 (110 aa).

Zn(2+)-binding residues include Cys-65, Cys-68, Cys-94, and Cys-97.

It belongs to the eukaryotic/archaeal RNase P protein component 4 family. Consists of a catalytic RNA component and at least 5 protein subunits. Zn(2+) is required as a cofactor.

It is found in the cytoplasm. It carries out the reaction Endonucleolytic cleavage of RNA, removing 5'-extranucleotides from tRNA precursor.. Its function is as follows. Part of ribonuclease P, a protein complex that generates mature tRNA molecules by cleaving their 5'-ends. This Methanococcus maripaludis (strain DSM 14266 / JCM 13030 / NBRC 101832 / S2 / LL) protein is Ribonuclease P protein component 4.